A 187-amino-acid polypeptide reads, in one-letter code: Calcium and integrin-binding family member 2 (187 aa).

EF-hand domains lie at 66–101, 103–138, and 144–179; these read RENP…LCES, PREL…LTKS, and EVVL…APDF. The Ca(2+) site is built by aspartate 116, asparagine 118, aspartate 120, aspartate 127, aspartate 157, aspartate 159, aspartate 161, lysine 163, and aspartate 168.

In terms of assembly, monomer. Homodimer. Interacts with WHRN and MYO7A. Interacts with ITGA2B (via C-terminus cytoplasmic tail region); the interactions are stabilized/increased in a calcium and magnesium-dependent manner. Interacts with ITGA7 (via C-terminus cytoplasmic tail region); the interactions are stabilized/increased in a calcium and magnesium-dependent manner. Interacts with TMC1. Interacts with TMC2.

Its subcellular location is the cytoplasm. The protein localises to the cell projection. It is found in the stereocilium. It localises to the photoreceptor inner segment. The protein resides in the cilium. Its subcellular location is the photoreceptor outer segment. The protein localises to the cell membrane. It is found in the sarcolemma. Functionally, calcium- and integrin-binding protein that plays a role in intracellular calcium homeostasis. Acts as an auxiliary subunit of the sensory mechanoelectrical transduction (MET) channel in hair cells. Essential for mechanoelectrical transduction (MET) currents in auditory hair cells and thereby required for hearing. Regulates the function of hair cell mechanotransduction by controlling the distribution of transmembrane channel-like proteins TMC1 and TMC2, and by regulating the function of the MET channels in hair cells. Required for the maintenance of auditory hair cell stereocilia bundle morphology and function and for hair-cell survival in the cochlea. Critical for proper photoreceptor cell maintenance and function. Plays a role in intracellular calcium homeostasis by decreasing ATP-induced calcium release. In Rattus norvegicus (Rat), this protein is Calcium and integrin-binding family member 2 (Cib2).